Consider the following 106-residue polypeptide: NADH dehydrogenase [ubiquinone] iron-sulfur protein 5 (106 aa).

Positions 30-74 (PSRCHAFEKEWIECAHGIGSIRAEKECKIEFEDFRECLLRQKTMK) constitute a CHCH domain. 2 short sequence motifs (cx9C motif) span residues 33–43 (CHAFEKEWIEC) and 56–66 (CKIEFEDFREC). Intrachain disulfides connect Cys33-Cys66 and Cys43-Cys56. The tract at residues 84–106 (EKLIKEGKYTPPPHHSGQEEPRS) is disordered.

It belongs to the complex I NDUFS5 subunit family. In terms of assembly, mammalian complex I is composed of 45 different subunits. This is a component of the iron-sulfur (IP) fragment of the enzyme.

It localises to the mitochondrion inner membrane. It is found in the mitochondrion intermembrane space. Its function is as follows. Accessory subunit of the mitochondrial membrane respiratory chain NADH dehydrogenase (Complex I), that is believed not to be involved in catalysis. Complex I functions in the transfer of electrons from NADH to the respiratory chain. The immediate electron acceptor for the enzyme is believed to be ubiquinone. In Bos taurus (Bovine), this protein is NADH dehydrogenase [ubiquinone] iron-sulfur protein 5 (NDUFS5).